The primary structure comprises 461 residues: Photosystem II CP43 reaction center protein (461 aa).

Positions 1-2 (ME) are excised as a propeptide. At T3 the chain carries N-acetylthreonine. A Phosphothreonine modification is found at T3. A run of 5 helical transmembrane segments spans residues 57-81 (LFEV…PHLA), 122-143 (LLGP…KDRN), 166-188 (KALY…RKIT), 243-263 (KPFA…LSYS), and 279-300 (WFNN…ASQA). E355 contacts [CaMn4O5] cluster. Residues 435–459 (RARAAAAGFEKGIDRDLEPVLFMTP) traverse the membrane as a helical segment.

Belongs to the PsbB/PsbC family. PsbC subfamily. In terms of assembly, PSII is composed of 1 copy each of membrane proteins PsbA, PsbB, PsbC, PsbD, PsbE, PsbF, PsbH, PsbI, PsbJ, PsbK, PsbL, PsbM, PsbT, PsbX, PsbY, PsbZ, Psb30/Ycf12, at least 3 peripheral proteins of the oxygen-evolving complex and a large number of cofactors. It forms dimeric complexes. Binds multiple chlorophylls and provides some of the ligands for the Ca-4Mn-5O cluster of the oxygen-evolving complex. It may also provide a ligand for a Cl- that is required for oxygen evolution. PSII binds additional chlorophylls, carotenoids and specific lipids. is required as a cofactor.

It localises to the plastid. The protein localises to the chloroplast thylakoid membrane. Its function is as follows. One of the components of the core complex of photosystem II (PSII). It binds chlorophyll and helps catalyze the primary light-induced photochemical processes of PSII. PSII is a light-driven water:plastoquinone oxidoreductase, using light energy to abstract electrons from H(2)O, generating O(2) and a proton gradient subsequently used for ATP formation. The chain is Photosystem II CP43 reaction center protein from Nandina domestica (Heavenly bamboo).